Here is a 191-residue protein sequence, read N- to C-terminus: Casparian strip membrane protein 4 (191 aa).

At 1–27 (MKTGSVEAGEQASEDATPRRGKKLNRG) the chain is on the cytoplasmic side. Residues 28-48 (ILILDLVLRVFGAICTLGSAV) form a helical membrane-spanning segment. Residues 49–72 (AMGTTSQTLPSSSQFFRFRAKYND) lie on the Extracellular side of the membrane. A helical membrane pass occupies residues 73–93 (LPMFMFFAIANSIVCAYLVLS). Over 94–110 (LRLSIFHIIRSAGIITR) the chain is Cytoplasmic. A helical transmembrane segment spans residues 111-131 (IILVTFDMVMLVLLTCGASAA). The Extracellular portion of the chain corresponds to 132-160 (TSIVYLAHKGNASANWLPFCVRFSHFCNR). An N-linked (GlcNAc...) asparagine glycan is attached at Asn-142. A helical membrane pass occupies residues 161-181 (ISGSLIGSFFSIIIFMLLVIL). Residues 182 to 191 (SAVSQFSICN) are Cytoplasmic-facing.

It belongs to the Casparian strip membrane proteins (CASP) family. In terms of assembly, homodimer and heterodimers.

The protein resides in the cell membrane. Functionally, regulates membrane-cell wall junctions and localized cell wall deposition. Required for establishment of the Casparian strip membrane domain (CSD) and the subsequent formation of Casparian strips, a cell wall modification of the root endodermis that determines an apoplastic barrier between the intraorganismal apoplasm and the extraorganismal apoplasm and prevents lateral diffusion. This Ricinus communis (Castor bean) protein is Casparian strip membrane protein 4.